The primary structure comprises 284 residues: Phosphonates import ATP-binding protein PhnC 1 (284 aa).

The ABC transporter domain occupies 5–253; the sequence is IEVRGLSKSF…MLRDLYGSEA (249 aa). ATP is bound at residue 38–45; it reads GASGSGKS.

This sequence belongs to the ABC transporter superfamily. Phosphonates importer (TC 3.A.1.9.1) family. The complex is composed of two ATP-binding proteins (PhnC), two transmembrane proteins (PhnE) and a solute-binding protein (PhnD).

The protein localises to the cell inner membrane. It catalyses the reaction phosphonate(out) + ATP + H2O = phosphonate(in) + ADP + phosphate + H(+). Functionally, part of the ABC transporter complex PhnCDE involved in phosphonates import. Responsible for energy coupling to the transport system. The chain is Phosphonates import ATP-binding protein PhnC 1 from Cupriavidus metallidurans (strain ATCC 43123 / DSM 2839 / NBRC 102507 / CH34) (Ralstonia metallidurans).